The sequence spans 270 residues: Chlorophyll a-b binding protein 7, chloroplastic (270 aa).

A chloroplast-targeting transit peptide spans 1 to 42; sequence MASACASSTIAAVAFSSPSSRRNGSIVGTTKASFLGGRRLRV. W68 is a binding site for chlorophyll b. Chlorophyll a-binding residues include F88, E107, and H110. R112 serves as a coordination point for chlorophyll b. The helical transmembrane segment at 113 to 133 threads the bilayer; it reads WAMLGAAGIFIPELLTKIGIL. Q144 is a binding site for chlorophyll a. Residues 146 to 166 traverse the membrane as a helical segment; the sequence is YFTDTTTLFIVELVLIGWAEG. Chlorophyll b contacts are provided by I155, E165, and R168. Residues K221, E222, N225, R227, Q239, and H254 each coordinate chlorophyll a. The chain crosses the membrane as a helical span at residues 228 to 248; that stretch reads LAMLAVMGAWFQHIYTGTGPI.

Belongs to the light-harvesting chlorophyll a/b-binding (LHC) protein family. In terms of assembly, the LHC complex consists of chlorophyll a-b binding proteins. Requires Binds at least 14 chlorophylls (8 Chl-a and 6 Chl-b) and carotenoids such as lutein and neoxanthin. as cofactor. In terms of processing, photoregulated by reversible phosphorylation of its threonine residues.

The protein resides in the plastid. The protein localises to the chloroplast thylakoid membrane. Its function is as follows. The light-harvesting complex (LHC) functions as a light receptor, it captures and delivers excitation energy to photosystems with which it is closely associated. In Solanum lycopersicum (Tomato), this protein is Chlorophyll a-b binding protein 7, chloroplastic (CAB7).